The primary structure comprises 132 residues: D-ribose pyranase (132 aa).

Histidine 20 functions as the Proton donor in the catalytic mechanism. Substrate-binding positions include aspartate 28, histidine 99, and 121–123 (YSN).

This sequence belongs to the RbsD / FucU family. RbsD subfamily. Homodecamer.

Its subcellular location is the cytoplasm. It carries out the reaction beta-D-ribopyranose = beta-D-ribofuranose. Its pathway is carbohydrate metabolism; D-ribose degradation; D-ribose 5-phosphate from beta-D-ribopyranose: step 1/2. In terms of biological role, catalyzes the interconversion of beta-pyran and beta-furan forms of D-ribose. The sequence is that of D-ribose pyranase from Lactococcus lactis subsp. cremoris (strain SK11).